A 140-amino-acid polypeptide reads, in one-letter code: Probable NADH dehydrogenase [ubiquinone] iron-sulfur protein 6, mitochondrial (140 aa).

The protein belongs to the complex I NDUFS6 subunit family. As to quaternary structure, complex I is composed of 45 different subunits. This is a component of the iron-sulfur (IP) fragment of the enzyme.

Its subcellular location is the mitochondrion inner membrane. Accessory subunit of the mitochondrial membrane respiratory chain NADH dehydrogenase (Complex I), that is believed not to be involved in catalysis. Complex I functions in the transfer of electrons from NADH to the respiratory chain. The immediate electron acceptor for the enzyme is believed to be ubiquinone. The sequence is that of Probable NADH dehydrogenase [ubiquinone] iron-sulfur protein 6, mitochondrial (nduf-6) from Caenorhabditis elegans.